Here is a 612-residue protein sequence, read N- to C-terminus: MNKQVIFGLLLACILVCISGQDEEDYQESPTVLIALLVRNKAHILPMFLSYLEQQDYPKERIAIWLRCDHSNDDSIELLRQWLDNSGDLYHSVSYEFKPEEQSFVNGTSPYEWPASRFKHLIALKEEAFQYGRDIWADYVFFLDADVLLTSKDSLKVLTRLQLPIVAPMLISESLYSNFWCGMTEDYYYRRTDEYKEIYHVKKQGSFPVPMVHTAVLVNMNHRAVRNLTFDRNKLVELQKSRQQEPLYDGPADDIIVFAISANSSGIPLHICNDITFGYILQPLEPGDTLDHDVQQLVNLKSIMVNELGAVPPLLDYYKHLEKKPEKSKLSLDRIFMINLKRRPERREKMERLFDEIGIEAEHFPAVDGKELSTERLLEMGVRFLPGYEDPYHHRAMTMGEIGCFLSHYNIWVMMVRKQLKEVLILEDDIRFEPYFRQNAVRILNQARNAAQYDLIYFGRKRLKEESEPAVENADNLVHAGYSYWTLGYVISLQGALKLLAAKPLDKLIPVDEFLPLMFDRHPNKTWTEAFPKRNLVAFSASPLLLYPIYYTGESGYISDTEDSQQISVETSEEGEARLKSDREQVFDHEQEFKLNPELKLGESLSKSHQEL.

A signal peptide spans 1–20; the sequence is MNKQVIFGLLLACILVCISG. Residues N106, N227, N263, and N524 are each glycosylated (N-linked (GlcNAc...) asparagine). The Prevents secretion from ER signature appears at 609 to 612; sequence HQEL.

Belongs to the glycosyltransferase 25 family.

Its subcellular location is the endoplasmic reticulum lumen. The protein is Glycosyltransferase 25 family member of Drosophila melanogaster (Fruit fly).